Here is a 306-residue protein sequence, read N- to C-terminus: Probable dimethyladenosine transferase (306 aa).

S-adenosyl-L-methionine is bound by residues His-30, Leu-32, Gly-57, Glu-78, Asp-106, and Asn-121.

This sequence belongs to the class I-like SAM-binding methyltransferase superfamily. rRNA adenine N(6)-methyltransferase family. As to quaternary structure, part of the small subunit (SSU) processome, composed of more than 70 proteins and the RNA chaperone small nucleolar RNA (snoRNA) U3.

The protein resides in the nucleus. Its subcellular location is the nucleolus. It catalyses the reaction adenosine(1779)/adenosine(1780) in 18S rRNA + 4 S-adenosyl-L-methionine = N(6)-dimethyladenosine(1779)/N(6)-dimethyladenosine(1780) in 18S rRNA + 4 S-adenosyl-L-homocysteine + 4 H(+). Its function is as follows. Specifically dimethylates two adjacent adenosines in the loop of a conserved hairpin near the 3'-end of 18S rRNA in the 40S particle. Involved in the pre-rRNA processing steps leading to small-subunit rRNA production independently of its RNA-modifying catalytic activity. Part of the small subunit (SSU) processome, first precursor of the small eukaryotic ribosomal subunit. During the assembly of the SSU processome in the nucleolus, many ribosome biogenesis factors, an RNA chaperone and ribosomal proteins associate with the nascent pre-rRNA and work in concert to generate RNA folding, modifications, rearrangements and cleavage as well as targeted degradation of pre-ribosomal RNA by the RNA exosome. The sequence is that of Probable dimethyladenosine transferase from Drosophila melanogaster (Fruit fly).